Consider the following 441-residue polypeptide: Interferon-related developmental regulator 2 (441 aa).

Residues 1 to 15 (MPRARKGNALRKGGQ) show a composition bias toward basic residues. Positions 1 to 51 (MPRARKGNALRKGGQRRGGGARSSTQADSGSSEDEAASEARSTTSDCPSLL) are disordered.

This sequence belongs to the IFRD family. In terms of assembly, associates with ribosomes; promoting ribosome inactivation.

In terms of biological role, ribosome-binding protein that acts as an inhibitor of mRNA translation by promoting ribosome inactivation. Associates with the P- and E-sites of the ribosome and inserts a C-terminal helix into the mRNA exit channel to preclude translation. The sequence is that of Interferon-related developmental regulator 2 from Mus musculus (Mouse).